The chain runs to 502 residues: Glycerol kinase (502 aa).

Thr-14 lines the ADP pocket. ATP-binding residues include Thr-14, Thr-15, and Ser-16. Thr-14 serves as a coordination point for sn-glycerol 3-phosphate. Position 18 (Arg-18) interacts with ADP. The sn-glycerol 3-phosphate site is built by Arg-84, Glu-85, Tyr-136, and Asp-246. Glycerol contacts are provided by Arg-84, Glu-85, Tyr-136, Asp-246, and Gln-247. The ADP site is built by Thr-268 and Gly-311. ATP is bound by residues Thr-268, Gly-311, Gln-315, and Gly-412. 2 residues coordinate ADP: Gly-412 and Asn-416.

This sequence belongs to the FGGY kinase family. In terms of assembly, homotetramer and homodimer (in equilibrium). Heterodimer with EIIA-Glc. Binds 1 zinc ion per glycerol kinase EIIA-Glc dimer. The zinc ion is important for dimerization.

It catalyses the reaction glycerol + ATP = sn-glycerol 3-phosphate + ADP + H(+). Its pathway is polyol metabolism; glycerol degradation via glycerol kinase pathway; sn-glycerol 3-phosphate from glycerol: step 1/1. Activity of this regulatory enzyme is affected by several metabolites. Allosterically and non-competitively inhibited by fructose 1,6-bisphosphate (FBP) and unphosphorylated phosphocarrier protein EIIA-Glc (III-Glc), an integral component of the bacterial phosphotransferase (PTS) system. In terms of biological role, key enzyme in the regulation of glycerol uptake and metabolism. Catalyzes the phosphorylation of glycerol to yield sn-glycerol 3-phosphate. The sequence is that of Glycerol kinase from Escherichia fergusonii (strain ATCC 35469 / DSM 13698 / CCUG 18766 / IAM 14443 / JCM 21226 / LMG 7866 / NBRC 102419 / NCTC 12128 / CDC 0568-73).